Consider the following 252-residue polypeptide: Nuclease C1 (252 aa).

His87 (proton acceptor) is an active-site residue. A Mg(2+)-binding site is contributed by Asn119.

The protein belongs to the DNA/RNA non-specific endonuclease family. It depends on Mg(2+) as a cofactor. Mn(2+) serves as cofactor.

Its subcellular location is the secreted. This enzyme has both RNase and DNase activity. In Cunninghamella echinulata var. echinulata, this protein is Nuclease C1 (NUC1CE).